The primary structure comprises 500 residues: Coiled-coil domain-containing protein 85A (500 aa).

Positions 1–23 (MSKAAGGSAPAAESCPSAPAGAS) are enriched in low complexity. The disordered stretch occupies residues 1-30 (MSKAAGGSAPAAESCPSAPAGASTPTGVDD). 2 coiled-coil regions span residues 38-104 (ELLQ…RDLC) and 132-171 (MHKEVALYLQKLKELEVKQEEVVKENMELKELCMLLDEEK). 2 disordered regions span residues 200-405 (RDVG…SGMN) and 426-465 (NRMLPQGSFRLSSGADGNNSSLNSPASFSGHTTPSQQPEP). A compositionally biased stretch (low complexity) spans 204–215 (DGSSTSSTGSTD). Residues 231-254 (HLQKPRSEGSPEHTKHRSTSPEHL) are compositionally biased toward basic and acidic residues. Residues 372–381 (GSGGSGGGSR) are compositionally biased toward gly residues. The span at 383-395 (GTLRRPAQEDSSS) shows a compositional bias: basic and acidic residues. A coiled-coil region spans residues 404-429 (MNESTLSYVRQLEARVRQLEEENRML). A compositionally biased stretch (polar residues) spans 434–463 (FRLSSGADGNNSSLNSPASFSGHTTPSQQP). Arginine 488 carries the asymmetric dimethylarginine modification.

Belongs to the CCDC85 family. In terms of assembly, may interact with ARVCF; CTNND1; CTNND2 and PKP4.

The protein localises to the cell junction. It is found in the adherens junction. In terms of biological role, may play a role in cell-cell adhesion and epithelium development through its interaction with proteins of the beta-catenin family. The sequence is that of Coiled-coil domain-containing protein 85A (Ccdc85a) from Mus musculus (Mouse).